The chain runs to 321 residues: AA9 family lytic polysaccharide monooxygenase D (321 aa).

The N-terminal stretch at 1–21 (MRSTIVATFAAGLVVASLVAA) is a signal peptide. His-22 provides a ligand contact to Cu(2+). Disulfide bonds link Cys-75/Cys-192 and Cys-116/Cys-120. A glycan (N-linked (GlcNAc...) asparagine) is linked at Asn-78. Residue His-105 coordinates Cu(2+). N-linked (GlcNAc...) asparagine glycosylation occurs at Asn-152. The O2 site is built by His-178 and Gln-187. Position 189 (Tyr-189) interacts with Cu(2+). Residue Asn-266 is glycosylated (N-linked (GlcNAc...) asparagine).

It belongs to the polysaccharide monooxygenase AA9 family. Cu(2+) is required as a cofactor.

The protein resides in the secreted. The enzyme catalyses [(1-&gt;4)-beta-D-glucosyl]n+m + reduced acceptor + O2 = 4-dehydro-beta-D-glucosyl-[(1-&gt;4)-beta-D-glucosyl]n-1 + [(1-&gt;4)-beta-D-glucosyl]m + acceptor + H2O.. In terms of biological role, lytic polysaccharide monooxygenase (LPMO) that depolymerizes crystalline and amorphous polysaccharides via the oxidation of scissile alpha- or beta-(1-4)-glycosidic bonds, yielding C1 or C4 oxidation products. Catalysis by LPMOs requires the reduction of the active-site copper from Cu(II) to Cu(I) by a reducing agent and H(2)O(2) or O(2) as a cosubstrate. The protein is AA9 family lytic polysaccharide monooxygenase D of Geotrichum candidum (Oospora lactis).